Consider the following 248-residue polypeptide: Short-chain dehydrogenase/reductase iacG (248 aa).

Residues Ile-14, Asn-35, Lys-41, Asp-58, Arg-120, and Val-187 each contribute to the NADP(+) site.

The protein belongs to the short-chain dehydrogenases/reductases (SDR) family.

It functions in the pathway secondary metabolite biosynthesis. Functionally, short-chain dehydrogenase/reductase; part of the gene cluster that mediates the biosynthesis of iso-A82775C, a enylepoxycyclohexane and biosynthetic precursor of the chloropestolide anticancer natural products. Within the cluster, the prenyltransferase iacE prenylates siccayne to generate pestalodiol E, using dimethylallyl diphosphate (DMAPP) as cosubstrate. The probable oxidoreductase iacF is then involved in the epoxidation of pestalodiol F to pestalodiol F, which is further converted to pestalofone A by the short-chain dehydrogenase/reductase iacG. Iso-A82775C is subsequently generated from pestalofone A by the short-chain dehydrogenase/reductase iacC. Iso-A82775C is further condensed with maldoxin via a Diels-Alder reaction to produce the anticancer natural products chloropestolides A to E. This Pestalotiopsis fici (strain W106-1 / CGMCC3.15140) protein is Short-chain dehydrogenase/reductase iacG.